The primary structure comprises 317 residues: Nucleosome assembly protein 1;4 (317 aa).

The Nuclear export signal signature appears at 52 to 67 (LSPKVTKRVLFLKDIQ). Positions 214 to 219 (KKKTKK) match the Nuclear localization signal motif. Residues 297-317 (ALVDEDDSDDNDDDDNDEKSD) form a disordered region. The segment covering 298–317 (LVDEDDSDDNDDDDNDEKSD) has biased composition (acidic residues).

The protein belongs to the nucleosome assembly protein (NAP) family. Can form homomeric and heteromeric protein complexes with NAP1;1, NAP1;2 and NAP1;3. Binds histone H2A. As to expression, expressed in the root segment covering the apical end of the differentiation zone, the elongation zone of the root and the mature pollen within the anthers of open flowers.

It is found in the nucleus. It localises to the cytoplasm. May modulate chromatin structure by regulation of nucleosome assembly/disassembly. This is Nucleosome assembly protein 1;4 (NAP1;4) from Arabidopsis thaliana (Mouse-ear cress).